We begin with the raw amino-acid sequence, 701 residues long: Polyribonucleotide nucleotidyltransferase (701 aa).

Residues D487 and D493 each coordinate Mg(2+). The KH domain occupies 554–613 (PTMIAMKIDTDKIRDVIGKGGATIRAICEETKASIDIEDDGSIKIFGESKEAAEAARQRV). The 69-residue stretch at 623–691 (GKIYVGKVER…NRGRIKLSIK (69 aa)) folds into the S1 motif domain.

It belongs to the polyribonucleotide nucleotidyltransferase family. In terms of assembly, component of the RNA degradosome, which is a multiprotein complex involved in RNA processing and mRNA degradation. Requires Mg(2+) as cofactor.

The protein resides in the cytoplasm. The enzyme catalyses RNA(n+1) + phosphate = RNA(n) + a ribonucleoside 5'-diphosphate. Involved in mRNA degradation. Catalyzes the phosphorolysis of single-stranded polyribonucleotides processively in the 3'- to 5'-direction. The sequence is that of Polyribonucleotide nucleotidyltransferase from Pseudomonas savastanoi pv. phaseolicola (strain 1448A / Race 6) (Pseudomonas syringae pv. phaseolicola (strain 1448A / Race 6)).